Here is a 400-residue protein sequence, read N- to C-terminus: Centrosomal protein CEP57L1 (400 aa).

Ser45 bears the Phosphoserine mark. Coiled coils occupy residues 47–111 and 138–213; these read NNQA…KKDI and NVER…QDRA. Disordered regions lie at residues 222–261 and 314–400; these read REPPQQRDHKFRTPTFERKKPFRTTSQARANPQSSGEPVS and MESK…KWEQ. A compositionally biased stretch (polar residues) spans 244 to 258; it reads RTTSQARANPQSSGE. Positions 261-345 form a coiled coil; the sequence is SICDSLSELL…EKIENSRINE (85 aa). Basic and acidic residues-rich tracts occupy residues 314–342 and 391–400; these read MESKGDQISKLKKHQDSVRKLQEKIENSR and LRRDDIKWEQ.

The protein belongs to the translokin family.

It localises to the cytoplasm. It is found in the cytoskeleton. Its subcellular location is the microtubule organizing center. The protein localises to the centrosome. Centrosomal protein which may be required for microtubule attachment to centrosomes. In Mus musculus (Mouse), this protein is Centrosomal protein CEP57L1 (Cep57l1).